The following is a 208-amino-acid chain: Large ribosomal subunit protein uL4 (208 aa).

Residues 49–78 form a disordered region; it reads HKAKTRAEVRGGGKKPFRQKGTGNARQGST. The segment covering 69 to 78 has biased composition (polar residues); it reads GTGNARQGST.

Belongs to the universal ribosomal protein uL4 family. As to quaternary structure, part of the 50S ribosomal subunit.

One of the primary rRNA binding proteins, this protein initially binds near the 5'-end of the 23S rRNA. It is important during the early stages of 50S assembly. It makes multiple contacts with different domains of the 23S rRNA in the assembled 50S subunit and ribosome. In terms of biological role, forms part of the polypeptide exit tunnel. This chain is Large ribosomal subunit protein uL4, found in Chlorobaculum tepidum (strain ATCC 49652 / DSM 12025 / NBRC 103806 / TLS) (Chlorobium tepidum).